The chain runs to 390 residues: Elongation factor Ts, mitochondrial (390 aa).

This sequence belongs to the EF-Ts family.

It is found in the mitochondrion. Its function is as follows. Associates with the EF-Tu.GDP complex and induces the exchange of GDP to GTP. It remains bound to the aminoacyl-tRNA.EF-Tu.GTP complex up to the GTP hydrolysis stage on the ribosome. The sequence is that of Elongation factor Ts, mitochondrial from Plasmodium vivax (strain Salvador I).